The sequence spans 465 residues: 23S rRNA (uracil(1939)-C(5))-methyltransferase RlmD (465 aa).

Residues 1–24 (MSEAVPLSTRRASSAGDAPGRAPV) form a disordered region. Residues 16-80 (GDAPGRAPVL…PTYEQAQVVD (65 aa)) enclose the TRAM domain. [4Fe-4S] cluster-binding residues include Cys-93, Cys-99, Cys-102, and Cys-181. S-adenosyl-L-methionine is bound by residues Gln-289, Phe-318, Asn-323, Glu-339, Asn-367, and Asp-388. Cys-421 acts as the Nucleophile in catalysis.

This sequence belongs to the class I-like SAM-binding methyltransferase superfamily. RNA M5U methyltransferase family. RlmD subfamily.

It catalyses the reaction uridine(1939) in 23S rRNA + S-adenosyl-L-methionine = 5-methyluridine(1939) in 23S rRNA + S-adenosyl-L-homocysteine + H(+). Its function is as follows. Catalyzes the formation of 5-methyl-uridine at position 1939 (m5U1939) in 23S rRNA. This chain is 23S rRNA (uracil(1939)-C(5))-methyltransferase RlmD, found in Burkholderia mallei (strain ATCC 23344).